A 1066-amino-acid polypeptide reads, in one-letter code: Protein sts5 (1066 aa).

Over residues 18-28 (QQDPSDAQSSP) the composition is skewed to low complexity. 3 disordered regions span residues 18–40 (QQDP…SLTT), 154–178 (ATST…SPNS), and 247–286 (SNFR…RKNL). Residues 29–40 (TFVPSANPSLTT) show a composition bias toward polar residues. At threonine 157 the chain carries Phosphothreonine. Over residues 168–178 (HSVASVSSPNS) the composition is skewed to low complexity. Threonine 262 carries the phosphothreonine modification. Phosphoserine is present on serine 264. Positions 270 to 280 (SGSGFSSGGSG) are enriched in gly residues. Threonine 377 carries the post-translational modification Phosphothreonine. Residues 454–480 (SSAANKERQTSSGNQGSSNNSGNDKPK) form a disordered region. A compositionally biased stretch (low complexity) spans 464–476 (SSGNQGSSNNSGN). A CSD2 domain is found at 482–556 (VWFKPSDKRV…AQVSALLHDT (75 aa)). One can recognise an RNB domain in the interval 618–934 (NINSSSATDF…VHYQLQLLLR (317 aa)). The 51-residue stretch at 983–1033 (QDGLVCFVAPSYFDVFFPSLGMEKRVHLDLLNLTHVRFEEDQGILSLYDES) folds into the DIS3L2 C-terminal domain.

Belongs to the RNR ribonuclease family. Interacts with serine/threonine phosphatase ppe1, protein kinase C and an osmosensing MAP kinase.

It is found in the cytoplasm. Functionally, required for the maintenance of cell shape during interphase. Required for localization of cortical actin to the growing tips before mitosis. The protein is Protein sts5 (sts5) of Schizosaccharomyces pombe (strain 972 / ATCC 24843) (Fission yeast).